We begin with the raw amino-acid sequence, 128 residues long: Large ribosomal subunit protein bL12 (128 aa).

It belongs to the bacterial ribosomal protein bL12 family. In terms of assembly, homodimer. Part of the ribosomal stalk of the 50S ribosomal subunit. Forms a multimeric L10(L12)X complex, where L10 forms an elongated spine to which 2 to 4 L12 dimers bind in a sequential fashion. Binds GTP-bound translation factors.

Forms part of the ribosomal stalk which helps the ribosome interact with GTP-bound translation factors. Is thus essential for accurate translation. The sequence is that of Large ribosomal subunit protein bL12 from Corynebacterium aurimucosum (strain ATCC 700975 / DSM 44827 / CIP 107346 / CN-1) (Corynebacterium nigricans).